Here is a 181-residue protein sequence, read N- to C-terminus: UPF0397 protein SSU98_0390 (181 aa).

Transmembrane regions (helical) follow at residues 9 to 29, 46 to 66, 70 to 90, 108 to 128, and 147 to 167; these read VVAT…INIP, LLAV…GHTL, LTYG…LVVG, ILFF…VIAP, and LVAG…LLVV.

Belongs to the UPF0397 family.

The protein localises to the cell membrane. The polypeptide is UPF0397 protein SSU98_0390 (Streptococcus suis (strain 98HAH33)).